Here is a 255-residue protein sequence, read N- to C-terminus: Probable iron chelatin transport ATP-binding protein jhp_0821 (255 aa).

Residues 3-240 form the ABC transporter domain; it reads LEVKNLSFKY…HNLSALYDTP (238 aa). ATP is bound at residue 35-42; that stretch reads APNGSGKT.

Belongs to the ABC transporter superfamily.

The protein localises to the cell inner membrane. In terms of biological role, part of a binding-protein-dependent transport system for an iron chelatin. Probably responsible for energy coupling to the transport system (Potential). This Helicobacter pylori (strain J99 / ATCC 700824) (Campylobacter pylori J99) protein is Probable iron chelatin transport ATP-binding protein jhp_0821.